Reading from the N-terminus, the 118-residue chain is Succinate dehydrogenase assembly factor 4, mitochondrial (118 aa).

A mitochondrion-targeting transit peptide spans 1–30; the sequence is MQSVTRQTARVLPQMGKQVSYLSTSGAWRA. Residues 65 to 118 form a disordered region; that stretch reads GKLDEFSRHPYQEKEPLKPWPNQTNPYTGEIGGPAGPEPTRYGDWERKGRVSDF. Basic and acidic residues-rich tracts occupy residues 66 to 81 and 105 to 118; these read KLDE…KEPL and RYGD…VSDF.

The protein belongs to the SDHAF4 family. In terms of assembly, interacts with SdhA in its FAD-bound form.

It is found in the mitochondrion matrix. Functionally, plays an essential role in the assembly of succinate dehydrogenase (SDH), an enzyme complex (also referred to as respiratory complex II) that is a component of both the tricarboxylic acid (TCA) cycle and the mitochondrial electron transport chain, and which couples the oxidation of succinate to fumarate with the reduction of ubiquinone (coenzyme Q) to ubiquinol. Binds to the flavoprotein subunit SdhA in its FAD-bound form, blocking the generation of excess reactive oxygen species (ROS) and facilitating its assembly with the iron-sulfur protein subunit SdhB into the SDH catalytic dimer. The sequence is that of Succinate dehydrogenase assembly factor 4, mitochondrial from Drosophila melanogaster (Fruit fly).